The primary structure comprises 85 residues: High affinity immunoglobulin epsilon receptor subunit gamma (85 aa).

The N-terminal stretch at 1-18 is a signal peptide; that stretch reads MIPAVVLLLLLLVEQAAA. Residues 19–23 lie on the Extracellular side of the membrane; it reads LGEPQ. A helical transmembrane segment spans residues 24–44; that stretch reads LCYILDAILFLYGIVLTLLYC. The Cytoplasmic portion of the chain corresponds to 45–85; the sequence is RLKLQVRKAATASEKSDGIYTGLSTRTQETYETLKHEKPPQ. The region spanning 53 to 81 is the ITAM domain; the sequence is AATASEKSDGIYTGLSTRTQETYETLKHE. The residue at position 64 (tyrosine 64) is a Phosphotyrosine. Serine 68 is subject to Phosphoserine. Tyrosine 75 bears the Phosphotyrosine mark. Residue threonine 77 is modified to Phosphothreonine.

The protein belongs to the CD3Z/FCER1G family. As to quaternary structure, igE Fc receptor is a tetramer of an alpha chain, a beta chain, and two disulfide linked gamma chains. Associates with FCGR1A; forms a functional signaling complex. The signaling subunit of immunoglobulin gamma (IgG) Fc receptor complex. As a homodimer or a heterodimer of CD247 and FCER1G, associates with the ligand binding subunit FCGR3A to form a functional receptor complex. Associates with CLEC6A. Interacts with CLEC4E. Interacts (via ITAM domain) with SYK (via SH2 domains); activates SYK, enabling integrin-mediated activation of neutrophils and macrophages. Interacts with CSF2RB and recruits SYK in response to IL3 stimulation; this interaction is direct. Interacts with CD300LH; the interaction may be indirect. Interacts with CD300LD. Interacts with TARM1.

It localises to the cell membrane. Its function is as follows. Adapter protein containing an immunoreceptor tyrosine-based activation motif (ITAM) that transduces activation signals from various immunoreceptors. As a component of the high-affinity immunoglobulin E (IgE) receptor, mediates allergic inflammatory signaling in mast cells. As a constitutive component of interleukin-3 receptor complex, selectively mediates interleukin 4/IL4 production by basophils priming T-cells toward effector T-helper 2 subset. Associates with pattern recognition receptors CLEC4D and CLEC4E to form a functional signaling complex in myeloid cells. Binding of mycobacterial trehalose 6,6'-dimycolate (TDM) to this receptor complex leads to phosphorylation of ITAM, triggering activation of SYK, CARD9 and NF-kappa-B, consequently driving maturation of antigen-presenting cells and shaping antigen-specific priming of T-cells toward effector T-helper 1 and T-helper 17 cell subtypes. May function cooperatively with other activating receptors. Functionally linked to integrin beta-2/ITGB2-mediated neutrophil activation. Also involved in integrin alpha-2/ITGA2-mediated platelet activation. This is High affinity immunoglobulin epsilon receptor subunit gamma (FCER1G) from Bos taurus (Bovine).